A 357-amino-acid chain; its full sequence is Metacaspase-3 (357 aa).

The active site involves histidine 168. The Ca(2+) site is built by aspartate 183, aspartate 199, and aspartate 200. Residue cysteine 223 is part of the active site. Position 230 (aspartate 230) interacts with Ca(2+).

Belongs to the peptidase C14B family.

The protein localises to the recycling endosome. Its activity is regulated as follows. Activated by Ca(2+). Cysteine protease that cleaves specifically after arginine or lysine residues. In the bloodstream form, may cleave inactive metacaspase-4 MCA4 prior to MCA4 secretion. In Trypanosoma brucei brucei, this protein is Metacaspase-3.